A 518-amino-acid chain; its full sequence is Beta-TrCP (518 aa).

Residues Met1–Thr12 are compositionally biased toward polar residues. Residues Met1–Pro24 are disordered. Basic and acidic residues predominate over residues Ser14 to Pro24. The F-box domain occupies Asp119–Leu157. 7 WD repeats span residues Glu230–Asp258, Gly270–Asp298, His310–Asp338, Gly353–Asn381, Gly393–Asp421, Gly433–Asp461, and Glu482–Asp510.

Part of a SCF (SKP1-cullin-F-box) ubiquitin-protein ligase complex. Interacts with fbxo5.

Functionally, substrate recognition component of a SCF (SKP1-CUL1-F-box protein) E3 ubiquitin-protein ligase complex which mediates the ubiquitination and subsequent proteasomal degradation of target proteins. Probably recognizes and binds to phosphorylated target proteins. May participate in Wnt signaling. The protein is Beta-TrCP (fbxw1) of Xenopus laevis (African clawed frog).